Reading from the N-terminus, the 256-residue chain is Type III pantothenate kinase (256 aa).

6–13 lines the ATP pocket; that stretch reads DVGNTNTV. Residues Y100 and 107 to 110 contribute to the substrate site; that span reads GADR. The Proton acceptor role is filled by D109. D129 lines the K(+) pocket. T132 lines the ATP pocket. Substrate is bound at residue T184.

It belongs to the type III pantothenate kinase family. Homodimer. Requires NH4(+) as cofactor. K(+) is required as a cofactor.

The protein localises to the cytoplasm. The catalysed reaction is (R)-pantothenate + ATP = (R)-4'-phosphopantothenate + ADP + H(+). It participates in cofactor biosynthesis; coenzyme A biosynthesis; CoA from (R)-pantothenate: step 1/5. In terms of biological role, catalyzes the phosphorylation of pantothenate (Pan), the first step in CoA biosynthesis. This Myxococcus xanthus (strain DK1622) protein is Type III pantothenate kinase.